Here is a 163-residue protein sequence, read N- to C-terminus: ATP synthase subunit b (163 aa).

Residues alanine 10–leucine 29 form a helical membrane-spanning segment.

This sequence belongs to the ATPase B chain family. F-type ATPases have 2 components, F(1) - the catalytic core - and F(0) - the membrane proton channel. F(1) has five subunits: alpha(3), beta(3), gamma(1), delta(1), epsilon(1). F(0) has three main subunits: a(1), b(2) and c(10-14). The alpha and beta chains form an alternating ring which encloses part of the gamma chain. F(1) is attached to F(0) by a central stalk formed by the gamma and epsilon chains, while a peripheral stalk is formed by the delta and b chains.

It localises to the cell membrane. In terms of biological role, f(1)F(0) ATP synthase produces ATP from ADP in the presence of a proton or sodium gradient. F-type ATPases consist of two structural domains, F(1) containing the extramembraneous catalytic core and F(0) containing the membrane proton channel, linked together by a central stalk and a peripheral stalk. During catalysis, ATP synthesis in the catalytic domain of F(1) is coupled via a rotary mechanism of the central stalk subunits to proton translocation. Component of the F(0) channel, it forms part of the peripheral stalk, linking F(1) to F(0). In Alkalihalophilus pseudofirmus (strain ATCC BAA-2126 / JCM 17055 / OF4) (Bacillus pseudofirmus), this protein is ATP synthase subunit b.